A 133-amino-acid polypeptide reads, in one-letter code: Small ribosomal subunit protein uS11 (133 aa).

Belongs to the universal ribosomal protein uS11 family. As to quaternary structure, part of the 30S ribosomal subunit. Interacts with proteins S7 and S18. Binds to IF-3.

Its function is as follows. Located on the platform of the 30S subunit, it bridges several disparate RNA helices of the 16S rRNA. Forms part of the Shine-Dalgarno cleft in the 70S ribosome. This is Small ribosomal subunit protein uS11 from Bordetella avium (strain 197N).